The primary structure comprises 124 residues: NADPH-dependent 7-cyano-7-deazaguanine reductase (124 aa).

Catalysis depends on cysteine 40, which acts as the Thioimide intermediate. The active-site Proton donor is the aspartate 47. Residues 62-64 and 81-82 contribute to the substrate site; these read VEL and HE.

The protein belongs to the GTP cyclohydrolase I family. QueF type 1 subfamily.

Its subcellular location is the cytoplasm. The enzyme catalyses 7-aminomethyl-7-carbaguanine + 2 NADP(+) = 7-cyano-7-deazaguanine + 2 NADPH + 3 H(+). Its pathway is tRNA modification; tRNA-queuosine biosynthesis. In terms of biological role, catalyzes the NADPH-dependent reduction of 7-cyano-7-deazaguanine (preQ0) to 7-aminomethyl-7-deazaguanine (preQ1). This chain is NADPH-dependent 7-cyano-7-deazaguanine reductase, found in Wolinella succinogenes (strain ATCC 29543 / DSM 1740 / CCUG 13145 / JCM 31913 / LMG 7466 / NCTC 11488 / FDC 602W) (Vibrio succinogenes).